An 833-amino-acid chain; its full sequence is Protein PAT1 homolog 1 (833 aa).

3 disordered regions span residues 279–313 (DMREDNKFSHPPPGFNQNVQPRMDPSLSPGGMHGM), 398–427 (NIRQNGPQFSHPSGPHSPGNRVQRKHSGMP), and 492–549 (EEAT…DKKL). The span at 303–313 (PSLSPGGMHGM) shows a compositional bias: low complexity. Over residues 398–408 (NIRQNGPQFSH) the composition is skewed to polar residues.

It belongs to the PAT1 family.

It localises to the cytoplasm. The protein localises to the P-body. RNA-binding protein involved in deadenylation-dependent decapping of mRNAs, leading to the degradation of mRNAs. Acts as a scaffold protein that connects deadenylation and decapping machinery. Required for the recruitment of P-body components such as cgh-1 in somatic blastomeres. May play a role in recruiting the decapping enzyme dcap-1 to cytoplasmic puncta in the cell body of the posterior touch receptor neuron, PLM. This chain is Protein PAT1 homolog 1, found in Caenorhabditis elegans.